The sequence spans 588 residues: Myc box-dependent-interacting protein 1 (588 aa).

Ala-2 is subject to N-acetylalanine. The segment at Ala-2 to Ala-122 is interaction with BIN2. Coiled coils occupy residues Ala-15–Glu-42 and His-193–His-274. One can recognise a BAR domain in the interval Val-29–Ser-276. Positions Phe-279–Lys-355 are disordered. Phosphoserine is present on residues Ser-296, Ser-298, and Ser-304. Residue Thr-308 is modified to Phosphothreonine. Residues Ser-324 and Ser-332 each carry the phosphoserine modification. Residues Phe-379 to Glu-422 are clathrin-binding. The interval Pro-448–Ser-483 is disordered. A compositionally biased stretch (low complexity) spans Glu-474–Ser-483. The region spanning Gly-515–Gln-588 is the SH3 domain.

In terms of assembly, heterodimer with AMPH. Binds SH3GLB1. Interacts (via SH3 domain) with DNM1. Interacts with SYNJ1. Interacts (via SH3 domain) with DNM2. Interacts with CLTC. Interacts with AP2A2. Interacts with AP2B1. Interacts with MYC (via N-terminal transactivation domain); the interaction requires the integrity of the conserved MYC box regions 1 and 2. Interacts with BIN2. Interacts with SNX4. Interacts (via BAR domain) with BACE1. Binds (via BAR domain) F-actin. Post-translationally, phosphorylated by protein kinase C. In terms of tissue distribution, highly expressed in the brain and muscle. Isoform AMPH2-1 is expressed only in the brain where it is concentrated in axon initial segments and nodes of Ranvier. Isoform AMPH2-2 is widely expressed.

Its subcellular location is the nucleus. The protein localises to the cytoplasm. The protein resides in the endosome. It localises to the cell membrane. It is found in the sarcolemma. Its subcellular location is the T-tubule. Is a key player in the control of plasma membrane curvature, and membrane shaping and remodeling. Required in muscle cells for the formation of T-tubules, tubular invaginations of the plasma membrane that function in depolarization-contraction coupling. Required in muscle cells for the formation of T-tubules, tubular invaginations of the plasma membrane that function in depolarization-contraction coupling. Is a negative regulator of endocytosis. Is also involved in the regulation of intracellular vesicles sorting, modulation of BACE1 trafficking and the control of amyloid-beta production. In neuronal circuits, endocytosis regulation may influence the internalization of PHF-tau aggregates. May be involved in the regulation of MYC activity and the control cell proliferation. In Rattus norvegicus (Rat), this protein is Myc box-dependent-interacting protein 1 (Bin1).